We begin with the raw amino-acid sequence, 888 residues long: Mitogen-activated protein kinase kinase kinase 12 (888 aa).

Over residues 26-42 (MRKLDPDTSDCTPEKDL) the composition is skewed to basic and acidic residues. The interval 26–104 (MRKLDPDTSD…TGSPESRASR (79 aa)) is disordered. Phosphothreonine occurs at positions 37 and 43. Over residues 64–75 (SPSPGGEPPPEP) the composition is skewed to pro residues. Positions 158–399 (ILDLQWVGSG…FRQILLHLDI (242 aa)) constitute a Protein kinase domain. Residues 164-172 (VGSGAQGAV) and Lys-185 each bind ATP. The Proton acceptor role is filled by Asp-269. Leucine-zipper stretches follow at residues 423–444 (VKLH…EEEL) and 476–497 (LNAL…EQAL). The tract at residues 557–620 (GVGLPGCPKA…GGLGVGPTAW (64 aa)) is disordered. Positions 572-584 (RSRRGKTRHRKAS) are enriched in basic residues. The span at 605 to 615 (GGLGSPGGLGV) shows a compositional bias: gly residues. Ser-640 is modified (phosphoserine). Disordered stretches follow at residues 654 to 731 (RGRG…YQHL) and 743 to 888 (TRSQ…SLPP). The span at 704 to 725 (PGEGVGLLGTGREGTTGRGGSR) shows a compositional bias: gly residues. Positions 752-763 (SEEEEGEVDSEV) are enriched in acidic residues. Composition is skewed to polar residues over residues 776 to 789 (NMRQ…SENP) and 798 to 812 (SEPS…GSTN). The span at 813 to 823 (TDERPDERSDD) shows a compositional bias: basic and acidic residues.

It belongs to the protein kinase superfamily. STE Ser/Thr protein kinase family. MAP kinase kinase kinase subfamily. As to quaternary structure, homodimer. Interacts with MBIP. The cofactor is Mg(2+). In terms of processing, autophosphorylated on Ser/Thr. Phosphorylated in cytosol under basal conditions and dephosphorylated when membrane-associated. The activity of MAP3K12 can be regulated through its proteasomal degradation. APOE, through a receptor-mediated mechanism, activates MAP3K12 by preventing its proteasomal degradation.

It localises to the cytoplasm. The protein resides in the cell membrane. It catalyses the reaction L-seryl-[protein] + ATP = O-phospho-L-seryl-[protein] + ADP + H(+). The catalysed reaction is L-threonyl-[protein] + ATP = O-phospho-L-threonyl-[protein] + ADP + H(+). Functionally, part of a non-canonical MAPK signaling pathway. Activated by APOE, enhances the AP-1-mediated transcription of APP, via a MAP kinase signal transduction pathway composed of MAP2K7 and MAPK1/ERK2 and MAPK3/ERK1. May be an activator of the JNK/SAPK pathway. This is Mitogen-activated protein kinase kinase kinase 12 (Map3k12) from Rattus norvegicus (Rat).